Reading from the N-terminus, the 47-residue chain is Delta-actitoxin-Aspp1b (47 aa).

Cystine bridges form between Cys4–Cys44, Cys6–Cys34, and Cys27–Cys45.

The protein belongs to the sea anemone sodium channel inhibitory toxin family. Type I subfamily.

The protein localises to the secreted. It is found in the nematocyst. Binds specifically to voltage-gated sodium channels (Nav), thereby delaying their inactivation during signal transduction. Has a longer mammalian heart stimulation effect than Hk2a, Hk8a and Hk16a. This is Delta-actitoxin-Aspp1b from Anthopleura sp. (strain 'Zhanjiang') (Sea anemone).